Here is a 232-residue protein sequence, read N- to C-terminus: 7-cyano-7-deazaguanine synthase (232 aa).

Residue 8-18 (LSGGLDSATVL) coordinates ATP. Zn(2+) contacts are provided by Cys188, Cys198, Cys201, and Cys204.

Belongs to the QueC family. Requires Zn(2+) as cofactor.

It catalyses the reaction 7-carboxy-7-deazaguanine + NH4(+) + ATP = 7-cyano-7-deazaguanine + ADP + phosphate + H2O + H(+). The protein operates within purine metabolism; 7-cyano-7-deazaguanine biosynthesis. Its function is as follows. Catalyzes the ATP-dependent conversion of 7-carboxy-7-deazaguanine (CDG) to 7-cyano-7-deazaguanine (preQ(0)). This is 7-cyano-7-deazaguanine synthase from Nitrosospira multiformis (strain ATCC 25196 / NCIMB 11849 / C 71).